Reading from the N-terminus, the 365-residue chain is Anthranilate phosphoribosyltransferase (365 aa).

Residues Gly96, Gly99 to Asp100, Thr104, Asn106 to Thr109, Lys124 to Ser132, and Ser136 contribute to the 5-phospho-alpha-D-ribose 1-diphosphate site. Gly96 lines the anthranilate pocket. A Mg(2+)-binding site is contributed by Ser108. Anthranilate is bound at residue Asn127. Arg182 serves as a coordination point for anthranilate. Residues Asp240 and Glu241 each coordinate Mg(2+).

It belongs to the anthranilate phosphoribosyltransferase family. As to quaternary structure, homodimer. The cofactor is Mg(2+).

It carries out the reaction N-(5-phospho-beta-D-ribosyl)anthranilate + diphosphate = 5-phospho-alpha-D-ribose 1-diphosphate + anthranilate. Its pathway is amino-acid biosynthesis; L-tryptophan biosynthesis; L-tryptophan from chorismate: step 2/5. Catalyzes the transfer of the phosphoribosyl group of 5-phosphorylribose-1-pyrophosphate (PRPP) to anthranilate to yield N-(5'-phosphoribosyl)-anthranilate (PRA). The protein is Anthranilate phosphoribosyltransferase of Colwellia psychrerythraea (strain 34H / ATCC BAA-681) (Vibrio psychroerythus).